The sequence spans 349 residues: Homoserine O-succinyltransferase (349 aa).

The active-site Acyl-thioester intermediate is C146. Substrate contacts are provided by K167 and S196. The active-site Proton acceptor is H239. E241 is an active-site residue. R253 contacts substrate.

It belongs to the MetA family.

The protein resides in the cytoplasm. The enzyme catalyses L-homoserine + succinyl-CoA = O-succinyl-L-homoserine + CoA. It functions in the pathway amino-acid biosynthesis; L-methionine biosynthesis via de novo pathway; O-succinyl-L-homoserine from L-homoserine: step 1/1. In terms of biological role, transfers a succinyl group from succinyl-CoA to L-homoserine, forming succinyl-L-homoserine. In vitro, can also use glutaryl-CoA as acyl donor. The chain is Homoserine O-succinyltransferase from Thiobacillus denitrificans (strain ATCC 25259 / T1).